Consider the following 97-residue polypeptide: Co-chaperonin GroES (97 aa).

The protein belongs to the GroES chaperonin family. In terms of assembly, heptamer of 7 subunits arranged in a ring. Interacts with the chaperonin GroEL.

It localises to the cytoplasm. Its function is as follows. Together with the chaperonin GroEL, plays an essential role in assisting protein folding. The GroEL-GroES system forms a nano-cage that allows encapsulation of the non-native substrate proteins and provides a physical environment optimized to promote and accelerate protein folding. GroES binds to the apical surface of the GroEL ring, thereby capping the opening of the GroEL channel. This Pseudomonas aeruginosa (strain LESB58) protein is Co-chaperonin GroES.